The primary structure comprises 327 residues: Malate dehydrogenase (327 aa).

Gly-12–Gly-18 lines the NAD(+) pocket. Residues Arg-93 and Arg-99 each contribute to the substrate site. Residues Asn-106, Gln-113, and Val-130–Asn-132 contribute to the NAD(+) site. The substrate site is built by Asn-132 and Arg-163. Residue His-188 is the Proton acceptor of the active site.

The protein belongs to the LDH/MDH superfamily. MDH type 2 family.

It catalyses the reaction (S)-malate + NAD(+) = oxaloacetate + NADH + H(+). Its function is as follows. Catalyzes the reversible oxidation of malate to oxaloacetate. This is Malate dehydrogenase from Cupriavidus metallidurans (strain ATCC 43123 / DSM 2839 / NBRC 102507 / CH34) (Ralstonia metallidurans).